A 220-amino-acid chain; its full sequence is UPF0319 protein YccT (220 aa).

A signal peptide spans Met-1 to Ala-20.

This sequence belongs to the UPF0319 family.

This Salmonella paratyphi A (strain ATCC 9150 / SARB42) protein is UPF0319 protein YccT.